Here is a 100-residue protein sequence, read N- to C-terminus: Small ribosomal subunit protein uS14c (100 aa).

The tract at residues 1-54 is disordered; that stretch reads MARKSLIQRERKRQKLEQKFHSIRRSSKKEISKVSSLSGKWEIHGKLQSPPRNS.

It belongs to the universal ribosomal protein uS14 family. As to quaternary structure, part of the 30S ribosomal subunit.

It is found in the plastid. Its subcellular location is the chloroplast. In terms of biological role, binds 16S rRNA, required for the assembly of 30S particles. This chain is Small ribosomal subunit protein uS14c, found in Piper cenocladum (Ant piper).